Reading from the N-terminus, the 217-residue chain is Small ribosomal subunit protein uS3 (217 aa).

The KH type-2 domain occupies Ile-40–Arg-110.

Belongs to the universal ribosomal protein uS3 family. Part of the 30S ribosomal subunit. Forms a tight complex with proteins S10 and S14.

Functionally, binds the lower part of the 30S subunit head. Binds mRNA in the 70S ribosome, positioning it for translation. The protein is Small ribosomal subunit protein uS3 of Rickettsia africae (strain ESF-5).